The chain runs to 340 residues: Guanine nucleotide-binding protein G(I)/G(S)/G(T) subunit beta-1 (340 aa).

At Ser2 the chain carries N-acetylserine. Residue Ser2 is modified to Phosphoserine. 7 WD repeats span residues 46–94 (RTRR…HAIP), 95–140 (LRSS…RELA), 141–181 (GHTG…TTFT), 182–223 (GHTG…QTFT), 224–267 (GHES…YSHD), 268–309 (NIIC…GVLA), and 310–340 (GHDN…KIWN). His266 carries the post-translational modification Phosphohistidine.

Belongs to the WD repeat G protein beta family. G proteins are composed of 3 units, alpha, beta and gamma. The heterodimer formed by GNB1 and GNG2 interacts with ARHGEF5. The heterodimer formed by GNB1 and GNG2 interacts with GRK2. Forms a complex with GNAO1 and GNG3. Interacts with ARHGEF18 and RASD2. Forms complexes with TAS2R14 and G-proteins; these complexes play a role in the perception of bitterness. Component of the TAS2R14-GNAI1 complex, consisting of TAS2R14, GNAI1, GNB1 and GNG2. Component of the TAS2R14-GNAT3 complex, consisting of TAS2R14, GNAT3, GNB1 and GNG2. Component of the TAS2R14-GNAS2 complex, consisting of TAS2R14, GNAS2, GNB1 and GNG2. In terms of processing, phosphorylation at His-266 by NDKB contributes to G protein activation by increasing the high energetic phosphate transfer onto GDP.

Guanine nucleotide-binding proteins (G proteins) are involved as a modulator or transducer in various transmembrane signaling systems. The beta and gamma chains are required for the GTPase activity, for replacement of GDP by GTP, and for G protein-effector interaction. The sequence is that of Guanine nucleotide-binding protein G(I)/G(S)/G(T) subunit beta-1 (GNB1) from Bos taurus (Bovine).